Here is a 333-residue protein sequence, read N- to C-terminus: Protein SEEDLING LETHAL 1, chloroplastic (333 aa).

Residues 1 to 55 constitute a chloroplast transit peptide; that stretch reads MQQEALSFLSSSLPSLHHNFPSLSRLRFNNFPALSFKPNTSSSSSSFFKSPDIPS. Positions 38–67 are disordered; it reads PNTSSSSSSFFKSPDIPSLSSTTTTTTTTE.

Belongs to the mTERF family. As to quaternary structure, self-interacts. Associates with the plastid-encoded RNA polymerase (PEP) complex. Interacts directly with PTAC7/PAP12, PTAC12/HMR/PAP5 and PTAC14/PAP7. Expressed in green aerial tissues such as cotyledons, leaves, flowers and siliques, but not in roots.

It localises to the plastid. The protein resides in the chloroplast stroma. It is found in the chloroplast nucleoid. Its function is as follows. Transcription termination factor required for chloroplast gene expression and protein synthesis in chloroplasts. Necessary for chloroplast photosynthetic complexes assembly by modulating the accumulation of photosynthetic proteins. Essential for embryogenesis. This chain is Protein SEEDLING LETHAL 1, chloroplastic, found in Arabidopsis thaliana (Mouse-ear cress).